Here is a 79-residue protein sequence, read N- to C-terminus: Short neurotoxin 7 (79 aa).

A signal peptide spans 1–21 (MKTLLLTLVMVTIMCLDLGYT). Disulfide bonds link Cys24/Cys41, Cys34/Cys59, Cys63/Cys71, and Cys72/Cys77.

The protein belongs to the three-finger toxin family. Short-chain subfamily. Type III alpha-neurotoxin sub-subfamily. Expressed by the venom gland.

Its subcellular location is the secreted. Functionally, binds with high affinity to muscle nicotinic acetylcholine receptor (nAChR) and hinders acetylcholine binding to the receptor, thereby impairing neuromuscular transmission. Competes with the binding of alpha-bungarotoxin on muscle AChR (from Torpedo) (IC(50)=0.30 uM). In vivo, causes muscle paralysis, spasms and increased respiration. This is Short neurotoxin 7 from Pseudonaja textilis (Eastern brown snake).